The primary structure comprises 639 residues: Protein argonaute (639 aa).

An N-terminal domain region spans residues 1–100 (MYLNLYKIDI…YIKKLFLDND (100 aa)). The tract at residues 101–153 (FYFKKGNNFISNSEVFSLDSNENVNAHLTYKIKIHNISNEYYLSILPKFTFLS) is linker L1. The interval 154–209 (KEPALESAIKSGYLYNIKSGKSFPYISGLDGILKIDIGNNQIVEVAYPENYLFNFT) is PAZ domain. Residues 210–292 (TRDAEKYGFS…KYSFYKNEQP (83 aa)) are linker L2. The segment at 293 to 424 (LKAIFFFSSK…YVYKMGNFIP (132 aa)) is mid domain. Positions 425 to 639 (ECKPFILKKM…DYEWKLYIPY (215 aa)) are PIWI domain. Residues aspartate 446, glutamate 482, aspartate 516, and asparagine 624 contribute to the active site. Residue aspartate 446 participates in Mn(2+) binding. Mn(2+)-binding residues include aspartate 516 and asparagine 624.

It belongs to the argonaute family. Long pAgo subfamily. Mn(2+) is required as a cofactor.

The protein resides in the cytoplasm. In terms of biological role, an RNA-guided ssDNA endonuclease that may play a role in defense against invading mobile genetic elements. Uses short 5'-OH-ssRNA sequences as guides (gRNA) to bind complementary target DNA (tDNA) or target RNA resulting in target cleavage. The cleavage site is 10 nucleotides (nt) downstream of the target residue base-paired with the 5'-end of the gRNA. Reaction rates are fastest on 5'-OH-gRNA:tDNA followed by 5'-OH-gRNA:target RNA. gRNA between 17-21 nt supports equivalent rates of cleavage, has no preferred 5'-nt. Has weak activity on tDNA with 5'-phospho-gRNA, yielding products 1-2 nt longer. Unlike other characterized prokaryotic Ago proteins symmetric mismatches centered around the cleavage site reduce cleavage efficiency. The protein is Protein argonaute of Marinitoga piezophila (strain DSM 14283 / JCM 11233 / KA3).